A 464-amino-acid chain; its full sequence is E3 ubiquitin-protein ligase RNF38 (464 aa).

Positions 1–94 (MRESEDSPSP…NSISQDENYH (94 aa)) are disordered. Positions 6 to 20 (DSPSPKRQRLSHSVF) match the Bipartite nuclear localization signal 1 motif. Over residues 38 to 53 (MTSNRQPPSVRPNQHH) the composition is skewed to polar residues. The Bipartite nuclear localization signal 2 signature appears at 64–79 (RNRRSPPVRRQRGRRE). Residues 64–83 (RNRRSPPVRRQRGRRERLSR) show a composition bias toward basic residues. The segment at 412–453 (CVVCMCDFESRQLLRVLPCNHEFHAKCVDKWLKGNRTCPICR) adopts an RING-type zinc-finger fold.

The protein resides in the nucleus. The enzyme catalyses S-ubiquitinyl-[E2 ubiquitin-conjugating enzyme]-L-cysteine + [acceptor protein]-L-lysine = [E2 ubiquitin-conjugating enzyme]-L-cysteine + N(6)-ubiquitinyl-[acceptor protein]-L-lysine.. The protein operates within protein modification; protein ubiquitination. Its function is as follows. Acts as an E3 ubiquitin-protein ligase able to ubiquitinate p53/TP53 which promotes its relocalization to discrete foci associated with PML nuclear bodies. Exhibits preference for UBE2D2 as a E2 enzyme. The sequence is that of E3 ubiquitin-protein ligase RNF38 from Mus musculus (Mouse).